Reading from the N-terminus, the 1206-residue chain is STE20-like serine/threonine-protein kinase (1206 aa).

Serine 14 is modified (phosphoserine). Residues 34–292 (WEIIGELGDG…TSQLLQHPFV (259 aa)) form the Protein kinase domain. ATP contacts are provided by residues 40–48 (LGDGAFGKV) and lysine 63. Aspartate 155 acts as the Proton acceptor in catalysis. Phosphothreonine is present on threonine 183. Position 189 is a phosphoserine (serine 189). Residues 308–352 (KAEVTEEVEDGKEEDDDDETESALPIPANKRASSDLSIASSEEDK) are disordered. Acidic residues predominate over residues 312–328 (TEEVEDGKEEDDDDETE). Serine 340, serine 341, serine 344, serine 347, serine 348, serine 354, and serine 372 each carry phosphoserine. Residues 364–440 (SERTEHNTSG…ESQPDTEDQQ (77 aa)) form a disordered region. Basic and acidic residues-rich tracts occupy residues 381–395 (LSEK…KTVD) and 420–429 (ENGREKKRPQ). The stretch at 468–492 (EEDRNEENQEIIENKLTQSEEIKDI) forms a coiled coil. Disordered regions lie at residues 515–761 (DNEV…SSSD) and 773–792 (TKDS…KTLK). Basic and acidic residues predominate over residues 520–536 (FTKEETQEKLGKDDKTH). A phosphoserine mark is found at serine 545 and serine 563. The span at 556-565 (TQKSAEQSQD) shows a compositional bias: polar residues. Over residues 584-609 (KATEGPEAHGAEEEPRSGERVEDKQL) the composition is skewed to basic and acidic residues. The span at 634 to 643 (EEPETDEVDQ) shows a compositional bias: acidic residues. Residues serine 645, serine 649, and serine 668 each carry the phosphoserine modification. The segment covering 691–702 (AEPQAPAASQAS) has biased composition (low complexity). Residues 747 to 757 (TDSGTGSTVEN) show a composition bias toward polar residues. Phosphoserine occurs at positions 776 and 778. Threonine 813 is subject to Phosphothreonine. Phosphoserine is present on serine 817. The stretch at 825-1037 (LRRQELRELR…LKNRQTQERA (213 aa)) forms a coiled coil. In terms of domain architecture, UVR spans 874–909 (DQEIENLEKQQKQTIERLEQEHTNRLRDEAKRIKGE). At threonine 1065 the chain carries Phosphothreonine. The stretch at 1077–1151 (AAQEEKRQKN…ELKEWREKLR (75 aa)) forms a coiled coil. Basic and acidic residues predominate over residues 1079 to 1099 (QEEKRQKNERMAQHQKHESQM). Disordered stretches follow at residues 1079-1100 (QEEK…SQMR) and 1181-1206 (LNPS…AWAG). Positions 1181 to 1200 (LNPSAQSRGCLQTSHPSSTR) are enriched in polar residues.

It belongs to the protein kinase superfamily. STE Ser/Thr protein kinase family. STE20 subfamily. In terms of processing, proteolytically cleaved by caspase-3. Post-translationally, autophosphorylated.

The protein resides in the cytoplasm. It catalyses the reaction L-seryl-[protein] + ATP = O-phospho-L-seryl-[protein] + ADP + H(+). The catalysed reaction is L-threonyl-[protein] + ATP = O-phospho-L-threonyl-[protein] + ADP + H(+). In terms of biological role, mediates apoptosis and actin stress fiber dissolution. The sequence is that of STE20-like serine/threonine-protein kinase (Slk) from Rattus norvegicus (Rat).